A 5641-amino-acid polypeptide reads, in one-letter code: Cyclochlorotine synthetase (5641 aa).

Residues 95–124 (PENLNGHLIGSTNGHKKQWENDSADDKRGQ) form a disordered region. Residues 111–124 (KQWENDSADDKRGQ) are compositionally biased toward basic and acidic residues. The adenylation (A) domain 1 stretch occupies residues 217 to 622 (FTENVQRYPT…GRRDTQVKIR (406 aa)). The Carrier 1 domain occupies 816-892 (TEEEYKIQTL…DLVSNCKMSA (77 aa)). The interval 821 to 889 (KIQTLKEIWS…QLSDLVSNCK (69 aa)) is thiolation (T) domain 1. S853 bears the O-(pantetheine 4'-phosphoryl)serine mark. Positions 926-1333 (EDVYPCTPLQ…AHVAEQIGQP (408 aa)) are condensation (C) domain 1. The tract at residues 1390-1768 (DGNLTFEELN…ISRATTQIKI (379 aa)) is adenylation (A) domain 2. The region spanning 1902 to 1978 (IELSEKQENM…QLVMIATELT (77 aa)) is the Carrier 2 domain. The thiolation (T) domain 2 stretch occupies residues 1907–1975 (KQENMARLWA…RFDQLVMIAT (69 aa)). An O-(pantetheine 4'-phosphoryl)serine modification is found at S1939. Positions 2022 to 2438 (DIYACTPFQE…DLASEQDLAK (417 aa)) are condensation (C) domain 2. The adenylation (A) domain 3 stretch occupies residues 2459-2859 (AEKARQHPNK…GRADTQVKLR (401 aa)). A Carrier 3 domain is found at 2976–3052 (GPLTEMETTL…GMAIKIQPIH (77 aa)). Residues 2977–3049 (PLTEMETTLA…NLAGMAIKIQ (73 aa)) form a thiolation (T) domain 3 region. Residue S3013 is modified to O-(pantetheine 4'-phosphoryl)serine. A condensation (C) domain 3 region spans residues 3089–3482 (DIYPCTPLQV…LETVLSAFST (394 aa)). Residues 3523 to 3873 (VQRAPDKVAI…IARKDLQVKL (351 aa)) are adenylation (A) domain 4. In terms of domain architecture, Carrier 4 spans 4005–4081 (IPSTPTEMKM…ELATKIAPRI (77 aa)). The segment at 4010–4078 (TEMKMQQLWA…RLSELATKIA (69 aa)) is thiolation (T) domain 4. Residue S4042 is modified to O-(pantetheine 4'-phosphoryl)serine. The condensation (C) domain 4 stretch occupies residues 4123 to 4549 (KDVYPCTPLQ…QSLDSLSQQD (427 aa)). Residues 4574 to 4982 (QEIAGRHPDA…GRIGTDIKLR (409 aa)) form an adenylation (A) domain 5 region. One can recognise a Carrier 5 domain in the interval 5118-5194 (PPSTQEEKVI…SLAEKISWES (77 aa)). The interval 5123 to 5191 (EEKVIAALWA…KLASLAEKIS (69 aa)) is thiolation (T) domain 5. S5155 is subject to O-(pantetheine 4'-phosphoryl)serine. Residues 5260-5556 (AYLDIGPDVQ…DKCTTCVSGS (297 aa)) form a condensation (C) domain 5 region.

The protein belongs to the NRP synthetase family.

It participates in mycotoxin biosynthesis. In terms of biological role, nonribosomal peptide synthetase; part of the gene cluster that mediates the biosynthesis of the mycotoxin cyclochlorotine, a hepatotoxic and carcinogenic cyclic chlorinated pentapeptide. Within the pathway, The NRPS cctN initially catalyzes the condensation of L-serine (Ser), Pro, L-2-aminobutyrate (2Abu), Ser, and beta-Phe in this order. During the chain elongation, side-chain hydroxy group of Ser4 would be used as a nucleophile, giving isocyclotine as a product of terminal condensation-like (CT) domain-catalyzed cyclization. After the dichlorination of Pro2 catalyzed by cctP2 to produce isocyclochlorotine, the cctO-mediated transacylation of isocyclochlorotine can furnish cyclochlorotine. The subsequent hydroxylation of cyclochlorotine by cctR yields hydroxycyclochlorotine as the final product. CctP1 probably acts as a phenylalanine aminomutase and provides the uncommon building block beta-Phe. Furthermore, 2Abu can be synthesized from threonine by one of the threonine dehydratases and transaminases localized outside of the cluster. The functions of the remaining proteins encoded by the cluster, cctM and cctT, have not been identified yet. The polypeptide is Cyclochlorotine synthetase (Talaromyces islandicus (Penicillium islandicum)).